Consider the following 252-residue polypeptide: Imidazole glycerol phosphate synthase subunit HisF (252 aa).

Residues aspartate 11 and aspartate 130 contribute to the active site.

The protein belongs to the HisA/HisF family. In terms of assembly, heterodimer of HisH and HisF.

The protein localises to the cytoplasm. The catalysed reaction is 5-[(5-phospho-1-deoxy-D-ribulos-1-ylimino)methylamino]-1-(5-phospho-beta-D-ribosyl)imidazole-4-carboxamide + L-glutamine = D-erythro-1-(imidazol-4-yl)glycerol 3-phosphate + 5-amino-1-(5-phospho-beta-D-ribosyl)imidazole-4-carboxamide + L-glutamate + H(+). It participates in amino-acid biosynthesis; L-histidine biosynthesis; L-histidine from 5-phospho-alpha-D-ribose 1-diphosphate: step 5/9. IGPS catalyzes the conversion of PRFAR and glutamine to IGP, AICAR and glutamate. The HisF subunit catalyzes the cyclization activity that produces IGP and AICAR from PRFAR using the ammonia provided by the HisH subunit. This is Imidazole glycerol phosphate synthase subunit HisF from Bacillus cereus (strain AH820).